The primary structure comprises 65 residues: Small ribosomal subunit protein bS21 (65 aa).

This sequence belongs to the bacterial ribosomal protein bS21 family.

The polypeptide is Small ribosomal subunit protein bS21 (Acidobacterium capsulatum (strain ATCC 51196 / DSM 11244 / BCRC 80197 / JCM 7670 / NBRC 15755 / NCIMB 13165 / 161)).